The sequence spans 113 residues: MQAKAVVRTVRIAPRKVRLVVDLIRGKQVGEAIAILNHTPKTASPVVEKVLKSAIANAEHNYEMDINNLVVEKVFVDEGPTLKRFRPRAMGRASQINKRTSHITVVVSEKKEG.

Belongs to the universal ribosomal protein uL22 family. In terms of assembly, part of the 50S ribosomal subunit.

In terms of biological role, this protein binds specifically to 23S rRNA; its binding is stimulated by other ribosomal proteins, e.g. L4, L17, and L20. It is important during the early stages of 50S assembly. It makes multiple contacts with different domains of the 23S rRNA in the assembled 50S subunit and ribosome. Functionally, the globular domain of the protein is located near the polypeptide exit tunnel on the outside of the subunit, while an extended beta-hairpin is found that lines the wall of the exit tunnel in the center of the 70S ribosome. The polypeptide is Large ribosomal subunit protein uL22 (Bacillus mycoides (strain KBAB4) (Bacillus weihenstephanensis)).